Reading from the N-terminus, the 872-residue chain is Probable cation-transporting P-type ATPase (872 aa).

Over 1–41 the chain is Cytoplasmic; sequence MNKWTGLSAAAVLESRAQHGANLIPTKKLTPFWLLFLEQFK. A helical membrane pass occupies residues 42-62; sequence SLVVILLLVATILSLVVAIIS. Residues 63–79 are Extracellular-facing; the sequence is GVNANWLFDHNLVIEWT. Residues 80 to 100 traverse the membrane as a helical segment; the sequence is QPFVILITVLANSLIGSIQEF. Residues 101–237 lie on the Cytoplasmic side of the membrane; that stretch reads KAQKSAHTLK…TKLSPLQQKL (137 aa). Residues 238-257 form a helical membrane-spanning segment; the sequence is EKVGKWFSWFGLGLFVVVFL. At 258-275 the chain is on the extracellular side; it reads VQLGLLGFHNFSANWSIA. Residues 276 to 293 traverse the membrane as a helical segment; sequence LIGAIALVVAIIPEGLVT. At 294–642 the chain is on the cytoplasmic side; sequence FINVIFALSV…EQGRKTFLTC (349 aa). Aspartate 331 functions as the 4-aspartylphosphate intermediate in the catalytic mechanism. The Mg(2+) site is built by aspartate 587 and aspartate 591. Residues 643-662 form a helical membrane-spanning segment; the sequence is KRVLFNLFLTSIAGTIVVLL. The Extracellular segment spans residues 663-685; it reads GLFVLGEVFREQLSKANHNFQVF. A helical membrane pass occupies residues 686 to 706; that stretch reads TPTQLLIINLFVHGFPAVALA. Residues 707-724 lie on the Cytoplasmic side of the membrane; the sequence is IQPVQEKLMLKPFSTKNL. The helical transmembrane segment at 725–747 threads the bilayer; sequence FYNRGGFDLIWQSLLLSFLTLLF. At 748–768 the chain is on the extracellular side; sequence YSLGMVYAINDPELGKSGDLI. A helical membrane pass occupies residues 769-788; the sequence is NRAGATCGFMVLGGSAALNS. At 789–801 the chain is on the cytoplasmic side; sequence LNLMVDRPLVATN. A helical membrane pass occupies residues 802–824; the sequence is PKHYGIVWLGALSSIFVFLLIIF. Residues 825 to 842 lie on the Extracellular side of the membrane; that stretch reads INPLGLVFSTLKDLTAHP. The chain crosses the membrane as a helical span at residues 843–863; it reads VLIGYSFGGVLLYMTINEVVK. The Cytoplasmic portion of the chain corresponds to 864-872; the sequence is LIRLSYGSV.

This sequence belongs to the cation transport ATPase (P-type) (TC 3.A.3) family. Type II subfamily.

The protein localises to the cell membrane. It catalyses the reaction ATP + H2O = ADP + phosphate + H(+). Functionally, could mediate calcium influx. This Mycoplasma pneumoniae (strain ATCC 29342 / M129 / Subtype 1) (Mycoplasmoides pneumoniae) protein is Probable cation-transporting P-type ATPase (pacL).